A 224-amino-acid polypeptide reads, in one-letter code: Urease accessory protein UreF (224 aa).

This sequence belongs to the UreF family. In terms of assembly, ureD, UreF and UreG form a complex that acts as a GTP-hydrolysis-dependent molecular chaperone, activating the urease apoprotein by helping to assemble the nickel containing metallocenter of UreC. The UreE protein probably delivers the nickel.

Its subcellular location is the cytoplasm. Functionally, required for maturation of urease via the functional incorporation of the urease nickel metallocenter. The protein is Urease accessory protein UreF of Pseudomonas putida (strain ATCC 700007 / DSM 6899 / JCM 31910 / BCRC 17059 / LMG 24140 / F1).